The sequence spans 944 residues: UvrABC system protein A (944 aa).

The ABC transporter 1 domain maps to 1–242 (MSKVDFLHIK…GKGIVKVENV (242 aa)). ATP is bound at residue 34 to 41 (GLSGSGKS). The C4-type; degenerate zinc finger occupies 256-283 (CPKGDFEMPKIETRLFSFNSPYGMCQNC). ABC transporter domains follow at residues 359-597 (EEID…KYLS) and 610-935 (SGSG…EKSY). 643-650 (GVSGSGKS) serves as a coordination point for ATP. Residues 744–770 (CEKCSGDGSIKIEMFFLPNVYITCDHC) form a C4-type zinc finger.

Belongs to the ABC transporter superfamily. UvrA family. In terms of assembly, forms a heterotetramer with UvrB during the search for lesions.

It is found in the cytoplasm. The UvrABC repair system catalyzes the recognition and processing of DNA lesions. UvrA is an ATPase and a DNA-binding protein. A damage recognition complex composed of 2 UvrA and 2 UvrB subunits scans DNA for abnormalities. When the presence of a lesion has been verified by UvrB, the UvrA molecules dissociate. This chain is UvrABC system protein A, found in Mycoplasmopsis pulmonis (strain UAB CTIP) (Mycoplasma pulmonis).